The primary structure comprises 331 residues: Ferredoxin--NADP reductase 2 (331 aa).

Glu37, Gln45, Tyr50, Val90, Phe124, Asp286, and Thr327 together coordinate FAD.

Belongs to the ferredoxin--NADP reductase type 2 family. Homodimer. It depends on FAD as a cofactor.

The catalysed reaction is 2 reduced [2Fe-2S]-[ferredoxin] + NADP(+) + H(+) = 2 oxidized [2Fe-2S]-[ferredoxin] + NADPH. The chain is Ferredoxin--NADP reductase 2 from Listeria innocua serovar 6a (strain ATCC BAA-680 / CLIP 11262).